The chain runs to 467 residues: Argininosuccinate lyase (467 aa).

It belongs to the lyase 1 family. Argininosuccinate lyase subfamily.

It localises to the cytoplasm. The enzyme catalyses 2-(N(omega)-L-arginino)succinate = fumarate + L-arginine. It functions in the pathway amino-acid biosynthesis; L-arginine biosynthesis; L-arginine from L-ornithine and carbamoyl phosphate: step 3/3. The sequence is that of Argininosuccinate lyase from Allorhizobium ampelinum (strain ATCC BAA-846 / DSM 112012 / S4) (Agrobacterium vitis (strain S4)).